The primary structure comprises 373 residues: Erythronate-4-phosphate dehydrogenase (373 aa).

2 residues coordinate substrate: serine 45 and threonine 66. Residues aspartate 146 and threonine 173 each coordinate NAD(+). Arginine 206 is an active-site residue. Residue aspartate 230 participates in NAD(+) binding. Residue glutamate 235 is part of the active site. Histidine 252 functions as the Proton donor in the catalytic mechanism. Residue glycine 255 coordinates NAD(+). Tyrosine 256 serves as a coordination point for substrate.

This sequence belongs to the D-isomer specific 2-hydroxyacid dehydrogenase family. PdxB subfamily. In terms of assembly, homodimer.

The protein resides in the cytoplasm. It catalyses the reaction 4-phospho-D-erythronate + NAD(+) = (R)-3-hydroxy-2-oxo-4-phosphooxybutanoate + NADH + H(+). It participates in cofactor biosynthesis; pyridoxine 5'-phosphate biosynthesis; pyridoxine 5'-phosphate from D-erythrose 4-phosphate: step 2/5. In terms of biological role, catalyzes the oxidation of erythronate-4-phosphate to 3-hydroxy-2-oxo-4-phosphonooxybutanoate. This Saccharophagus degradans (strain 2-40 / ATCC 43961 / DSM 17024) protein is Erythronate-4-phosphate dehydrogenase.